Here is an 821-residue protein sequence, read N- to C-terminus: V-type proton ATPase subunit a3 (821 aa).

Alanine 2 is subject to N-acetylalanine. Residues 2–421 (AESGGGGGCC…ANPGVFTIVT (420 aa)) lie on the Cytoplasmic side of the membrane. Residues 97–144 (KENDIDLDDVEVKLGELEAELVEINANNDKLQRSYNELMEYKLVLQKA) are a coiled coil. At serine 174 the chain carries Phosphoserine. Residues 422–442 (FPFLFAVMFGDWGHGICILLA) traverse the membrane as a helical segment. The Vacuolar portion of the chain corresponds to 443 to 469 (TMYLILKEKKLASQKLGDIMEMAFGGR). The chain crosses the membrane as a helical span at residues 470 to 490 (YVILMMSLFSIYTGLIYNEFF). At 491–548 (SIPFPLFAPSAYDCRDVSCSEATTIGLIKVRDTYPFGLDPVWHGSRSELPFLNSLKMK) the chain is on the cytoplasmic side. The chain crosses the membrane as a helical span at residues 549 to 569 (MSILLGVSQMNLGIIMSYFNA). The Vacuolar segment spans residues 570–581 (RFFKSSVNIWFQ). A helical transmembrane segment spans residues 582–602 (FIPQMIFLNSLFGYLSVLIII). Residues 603-640 (KWCTGSQADLYHVMIYMFLSPMDELGENQLFPHQKTLQ) lie on the Cytoplasmic side of the membrane. Residues 641–661 (LVLLFLALVSVPCMLLPKPFI) traverse the membrane as a helical segment. Topologically, residues 662 to 758 (LKKQHEARHQ…LLLAWGYNNP (97 aa)) are vacuolar. Residues 759-779 (LILIVGVLVFIFATVGVLLVM) traverse the membrane as a helical segment. At 780-821 (ETLSAFLHALRLHWVEFQNKFYEGDGYKFAPFTFIFTANEDE) the chain is on the cytoplasmic side.

Belongs to the V-ATPase 116 kDa subunit family. V-ATPase is a heteromultimeric enzyme composed of a peripheral catalytic V1 complex (components A to H) attached to an integral membrane V0 proton pore complex (components: a, c, c'', d and e). Expressed in etiolated seedlings hypocotyls.

The protein localises to the vacuole membrane. Its function is as follows. Essential component of the vacuolar proton pump (V-ATPase), a multimeric enzyme that catalyzes the translocation of protons across the membranes. Required for assembly and activity of the V-ATPase. Involved in vacuolar nutrient storage (e.g. accumulation and storage of nitrate) and in tolerance to some toxic ions (e.g. zinc ions sequestration in vacuoles). In Arabidopsis thaliana (Mouse-ear cress), this protein is V-type proton ATPase subunit a3 (VHA-a3).